Here is a 157-residue protein sequence, read N- to C-terminus: Crossover junction endodeoxyribonuclease RuvC (157 aa).

Catalysis depends on residues Asp7, Glu67, and Asp140. Asp7, Glu67, and Asp140 together coordinate Mg(2+).

It belongs to the RuvC family. Homodimer which binds Holliday junction (HJ) DNA. The HJ becomes 2-fold symmetrical on binding to RuvC with unstacked arms; it has a different conformation from HJ DNA in complex with RuvA. In the full resolvosome a probable DNA-RuvA(4)-RuvB(12)-RuvC(2) complex forms which resolves the HJ. It depends on Mg(2+) as a cofactor.

The protein localises to the cytoplasm. It catalyses the reaction Endonucleolytic cleavage at a junction such as a reciprocal single-stranded crossover between two homologous DNA duplexes (Holliday junction).. Its function is as follows. The RuvA-RuvB-RuvC complex processes Holliday junction (HJ) DNA during genetic recombination and DNA repair. Endonuclease that resolves HJ intermediates. Cleaves cruciform DNA by making single-stranded nicks across the HJ at symmetrical positions within the homologous arms, yielding a 5'-phosphate and a 3'-hydroxyl group; requires a central core of homology in the junction. The consensus cleavage sequence is 5'-(A/T)TT(C/G)-3'. Cleavage occurs on the 3'-side of the TT dinucleotide at the point of strand exchange. HJ branch migration catalyzed by RuvA-RuvB allows RuvC to scan DNA until it finds its consensus sequence, where it cleaves and resolves the cruciform DNA. This chain is Crossover junction endodeoxyribonuclease RuvC, found in Rickettsia prowazekii (strain Madrid E).